The primary structure comprises 254 residues: Adenosylcobinamide-GDP ribazoletransferase (254 aa).

7 helical membrane-spanning segments follow: residues 27-47 (SSLY…VLLA), 50-70 (GMGV…GLIL), 104-124 (VGSF…ICLL), 131-151 (AYGM…LLAA), 170-190 (AGWP…FVLL), 194-214 (LAPS…VGWL), and 233-253 (LVEA…FWAI).

Belongs to the CobS family. Mg(2+) is required as a cofactor.

The protein resides in the cell inner membrane. The catalysed reaction is alpha-ribazole + adenosylcob(III)inamide-GDP = adenosylcob(III)alamin + GMP + H(+). It carries out the reaction alpha-ribazole 5'-phosphate + adenosylcob(III)inamide-GDP = adenosylcob(III)alamin 5'-phosphate + GMP + H(+). It participates in cofactor biosynthesis; adenosylcobalamin biosynthesis; adenosylcobalamin from cob(II)yrinate a,c-diamide: step 7/7. Functionally, joins adenosylcobinamide-GDP and alpha-ribazole to generate adenosylcobalamin (Ado-cobalamin). Also synthesizes adenosylcobalamin 5'-phosphate from adenosylcobinamide-GDP and alpha-ribazole 5'-phosphate. In Chlorobaculum tepidum (strain ATCC 49652 / DSM 12025 / NBRC 103806 / TLS) (Chlorobium tepidum), this protein is Adenosylcobinamide-GDP ribazoletransferase.